The primary structure comprises 404 residues: Probable RNA polymerase sigma-C factor (404 aa).

The Polymerase core binding signature appears at 193–206 (DLIQEGTLGLERAV). The H-T-H motif DNA-binding region spans 362–381 (LSEIGRILNLSRERVRQIEA).

It belongs to the sigma-70 factor family.

Functionally, sigma factors are initiation factors that promote the attachment of RNA polymerase to specific initiation sites and are then released. This is Probable RNA polymerase sigma-C factor (sigC) from Synechocystis sp. (strain ATCC 27184 / PCC 6803 / Kazusa).